The primary structure comprises 66 residues: Moricin-1 (66 aa).

A signal peptide spans methionine 1–proline 24.

Expressed in fat body and to a lesser extent in hemocyte and Malpighian tubules.

It localises to the secreted. In terms of biological role, has antibacterial activity against Gram-positive and Gram-negative bacteria. Probably acts by disturbing membrane functions with its amphipathic structure. The protein is Moricin-1 (MOR1) of Bombyx mori (Silk moth).